The sequence spans 581 residues: Glutamyl-tRNA reductase (581 aa).

Residues 49-52, Ser-109, 114-116, and Gln-120 contribute to the substrate site; these read TCNR and EGQ. Cys-50 functions as the Nucleophile in the catalytic mechanism. 192-197 lines the NADP(+) pocket; that stretch reads GAGSMS. An insert region spans residues 292–416; it reads PAVEDTAVQE…AEAPRPQPVL (125 aa).

Belongs to the glutamyl-tRNA reductase family. Homodimer.

It catalyses the reaction (S)-4-amino-5-oxopentanoate + tRNA(Glu) + NADP(+) = L-glutamyl-tRNA(Glu) + NADPH + H(+). It functions in the pathway porphyrin-containing compound metabolism; protoporphyrin-IX biosynthesis; 5-aminolevulinate from L-glutamyl-tRNA(Glu): step 1/2. Its function is as follows. Catalyzes the NADPH-dependent reduction of glutamyl-tRNA(Glu) to glutamate 1-semialdehyde (GSA). The sequence is that of Glutamyl-tRNA reductase from Streptomyces coelicolor (strain ATCC BAA-471 / A3(2) / M145).